The following is a 134-amino-acid chain: Cystatin-1 (134 aa).

The first 17 residues, 1-17, serve as a signal peptide directing secretion; sequence MKAIYLILTVLCGFSAS. One can recognise a Cystatin domain in the interval 21 to 116; that stretch reads GGWRDKDVDD…CTAIIWTRSW (96 aa). The short motif at 65–69 is the Secondary area of contact element; that stretch reads QVVSG. Cystine bridges form between Cys83–Cys96 and Cys107–Cys127.

It belongs to the cystatin family. In terms of tissue distribution, expressed by the venom gland.

It is found in the secreted. Functionally, inhibits various C1 cysteine proteases. This protein has no toxic activity and its function in the venom is unknown. It may play a role as a housekeeping or regulatory protein. The sequence is that of Cystatin-1 from Chilobrachys guangxiensis (Chinese earth tiger tarantula).